A 140-amino-acid polypeptide reads, in one-letter code: 3-hydroxyacyl-[acyl-carrier-protein] dehydratase FabZ (140 aa).

Histidine 47 is a catalytic residue.

It belongs to the thioester dehydratase family. FabZ subfamily.

It localises to the cytoplasm. It carries out the reaction a (3R)-hydroxyacyl-[ACP] = a (2E)-enoyl-[ACP] + H2O. Involved in unsaturated fatty acids biosynthesis. Catalyzes the dehydration of short chain beta-hydroxyacyl-ACPs and long chain saturated and unsaturated beta-hydroxyacyl-ACPs. The protein is 3-hydroxyacyl-[acyl-carrier-protein] dehydratase FabZ of Streptococcus pneumoniae serotype 4 (strain ATCC BAA-334 / TIGR4).